A 305-amino-acid chain; its full sequence is NDP-polyphosphate phosphotransferase 1 (305 aa).

The protein belongs to the polyphosphate kinase 2 (PPK2) family. Class I subfamily.

It carries out the reaction [phosphate](n) + ATP = [phosphate](n+1) + ADP. The catalysed reaction is [phosphate](n) + CTP = [phosphate](n+1) + CDP. It catalyses the reaction [phosphate](n) + GTP = [phosphate](n+1) + GDP. The enzyme catalyses [phosphate](n) + UTP = [phosphate](n+1) + UDP. Its activity is regulated as follows. Shows little dependence on metals. Its function is as follows. Uses inorganic polyphosphate (polyP) as a donor to convert NDP to NTP. PolyP hydrolysis is slightly faster with GDP, but it can also use ADP, CDP and UDP. In Ruegeria pomeroyi (strain ATCC 700808 / DSM 15171 / DSS-3) (Silicibacter pomeroyi), this protein is NDP-polyphosphate phosphotransferase 1.